The sequence spans 274 residues: Diaminopimelate epimerase (274 aa).

Positions 11, 44, and 64 each coordinate substrate. Cys73 serves as the catalytic Proton donor. Substrate-binding positions include Gly74 to Asn75, Asn157, Asn190, and Glu208 to Arg209. Cys217 acts as the Proton acceptor in catalysis. Gly218 to Ser219 contacts substrate.

The protein belongs to the diaminopimelate epimerase family. As to quaternary structure, homodimer.

The protein localises to the cytoplasm. The catalysed reaction is (2S,6S)-2,6-diaminopimelate = meso-2,6-diaminopimelate. Its pathway is amino-acid biosynthesis; L-lysine biosynthesis via DAP pathway; DL-2,6-diaminopimelate from LL-2,6-diaminopimelate: step 1/1. Its function is as follows. Catalyzes the stereoinversion of LL-2,6-diaminopimelate (L,L-DAP) to meso-diaminopimelate (meso-DAP), a precursor of L-lysine and an essential component of the bacterial peptidoglycan. The sequence is that of Diaminopimelate epimerase from Proteus mirabilis (strain HI4320).